Here is a 288-residue protein sequence, read N- to C-terminus: NAD(P)H-hydrate epimerase (288 aa).

Residues 1–48 (MSALRALLGLGLLAAGSRLRRVPGRAGACPAGSAWWEARRPHSGGGGE) constitute a mitochondrion transit peptide. A YjeF N-terminal domain is found at 65-275 (AQAVDEELFN…ALEKKYQLNL (211 aa)). 119 to 123 (NNGGD) serves as a coordination point for (6S)-NADPHX. K(+) is bound at residue Asn120. An N6-succinyllysine modification is found at Lys144. Position 185 (Asp185) interacts with K(+). Residues 189–195 (GFSFKGD) and Asp218 contribute to the (6S)-NADPHX site. Position 221 (Ser221) interacts with K(+).

Belongs to the NnrE/AIBP family. As to quaternary structure, homodimer. Interacts with APOA1 and APOA2. The cofactor is K(+). In terms of processing, undergoes physiological phosphorylation during sperm capacitation, downstream to PKA activation.

Its subcellular location is the mitochondrion. The protein resides in the secreted. It catalyses the reaction (6R)-NADHX = (6S)-NADHX. The catalysed reaction is (6R)-NADPHX = (6S)-NADPHX. Catalyzes the epimerization of the S- and R-forms of NAD(P)HX, a damaged form of NAD(P)H that is a result of enzymatic or heat-dependent hydration. This is a prerequisite for the S-specific NAD(P)H-hydrate dehydratase to allow the repair of both epimers of NAD(P)HX. Accelerates cholesterol efflux from endothelial cells to high-density lipoprotein (HDL) and thereby regulates angiogenesis. The protein is NAD(P)H-hydrate epimerase of Canis lupus familiaris (Dog).